A 345-amino-acid chain; its full sequence is Protein RecA (345 aa).

ATP is bound at residue 81–88 (GPESSGKT).

The protein belongs to the RecA family.

The protein resides in the cytoplasm. Can catalyze the hydrolysis of ATP in the presence of single-stranded DNA, the ATP-dependent uptake of single-stranded DNA by duplex DNA, and the ATP-dependent hybridization of homologous single-stranded DNAs. It interacts with LexA causing its activation and leading to its autocatalytic cleavage. The chain is Protein RecA from Mycoplasma mycoides.